The chain runs to 485 residues: Glutamyl-tRNA(Gln) amidotransferase subunit A (485 aa).

Active-site charge relay system residues include Lys-79 and Ser-154. The Acyl-ester intermediate role is filled by Ser-178.

The protein belongs to the amidase family. GatA subfamily. As to quaternary structure, heterotrimer of A, B and C subunits.

It catalyses the reaction L-glutamyl-tRNA(Gln) + L-glutamine + ATP + H2O = L-glutaminyl-tRNA(Gln) + L-glutamate + ADP + phosphate + H(+). Allows the formation of correctly charged Gln-tRNA(Gln) through the transamidation of misacylated Glu-tRNA(Gln) in organisms which lack glutaminyl-tRNA synthetase. The reaction takes place in the presence of glutamine and ATP through an activated gamma-phospho-Glu-tRNA(Gln). This chain is Glutamyl-tRNA(Gln) amidotransferase subunit A, found in Staphylococcus aureus (strain MRSA252).